Here is a 955-residue protein sequence, read N- to C-terminus: RNA polymerase-associated protein RapA (955 aa).

In terms of domain architecture, Helicase ATP-binding spans 163 to 333 (EVGHRYAPRV…FARLRLLDPE (171 aa)). 176–183 (DEVGLGKT) serves as a coordination point for ATP. The DEAH box signature appears at 279–282 (DEAH). The Helicase C-terminal domain occupies 478–642 (RVDWLLELLL…AVRDELFELL (165 aa)).

It belongs to the SNF2/RAD54 helicase family. RapA subfamily. As to quaternary structure, interacts with the RNAP. Has a higher affinity for the core RNAP than for the holoenzyme. Its ATPase activity is stimulated by binding to RNAP.

Its function is as follows. Transcription regulator that activates transcription by stimulating RNA polymerase (RNAP) recycling in case of stress conditions such as supercoiled DNA or high salt concentrations. Probably acts by releasing the RNAP, when it is trapped or immobilized on tightly supercoiled DNA. Does not activate transcription on linear DNA. Probably not involved in DNA repair. This is RNA polymerase-associated protein RapA from Aeromonas salmonicida (strain A449).